Here is a 347-residue protein sequence, read N- to C-terminus: Dihydroorotate dehydrogenase (quinone) (347 aa).

FMN is bound by residues 65–69 (AGLDK) and Thr89. Lys69 contacts substrate. Substrate is bound at residue 114-118 (NRMGF). The FMN site is built by Asn146 and Asn179. Asn179 serves as a coordination point for substrate. Ser182 functions as the Nucleophile in the catalytic mechanism. Asn184 provides a ligand contact to substrate. Residues Lys224 and Thr252 each contribute to the FMN site. Residue 253 to 254 (NT) coordinates substrate. Residues Gly275, Gly304, and 325 to 326 (YT) each bind FMN.

The protein belongs to the dihydroorotate dehydrogenase family. Type 2 subfamily. As to quaternary structure, monomer. FMN is required as a cofactor.

The protein resides in the cell membrane. The catalysed reaction is (S)-dihydroorotate + a quinone = orotate + a quinol. Its pathway is pyrimidine metabolism; UMP biosynthesis via de novo pathway; orotate from (S)-dihydroorotate (quinone route): step 1/1. Catalyzes the conversion of dihydroorotate to orotate with quinone as electron acceptor. This is Dihydroorotate dehydrogenase (quinone) from Herminiimonas arsenicoxydans.